The following is a 265-amino-acid chain: 4-diphosphocytidyl-2-C-methyl-D-erythritol kinase (265 aa).

K8 is a catalytic residue. 95–105 (PIGAGLGGGSS) serves as a coordination point for ATP. D135 is an active-site residue.

Belongs to the GHMP kinase family. IspE subfamily.

The enzyme catalyses 4-CDP-2-C-methyl-D-erythritol + ATP = 4-CDP-2-C-methyl-D-erythritol 2-phosphate + ADP + H(+). It functions in the pathway isoprenoid biosynthesis; isopentenyl diphosphate biosynthesis via DXP pathway; isopentenyl diphosphate from 1-deoxy-D-xylulose 5-phosphate: step 3/6. In terms of biological role, catalyzes the phosphorylation of the position 2 hydroxy group of 4-diphosphocytidyl-2C-methyl-D-erythritol. The chain is 4-diphosphocytidyl-2-C-methyl-D-erythritol kinase from Ureaplasma urealyticum serovar 10 (strain ATCC 33699 / Western).